A 311-amino-acid polypeptide reads, in one-letter code: Protein translocase subunit SecF (311 aa).

A run of 6 helical transmembrane segments spans residues valine 23–tyrosine 42, isoleucine 140–valine 160, tryptophan 164–phenylalanine 184, leucine 194–isoleucine 214, isoleucine 246–alanine 266, and valine 272–isoleucine 292.

This sequence belongs to the SecD/SecF family. SecF subfamily. In terms of assembly, forms a complex with SecD. Part of the essential Sec protein translocation apparatus which comprises SecA, SecYEG and auxiliary proteins SecDF-YajC and YidC.

The protein localises to the cell inner membrane. Its function is as follows. Part of the Sec protein translocase complex. Interacts with the SecYEG preprotein conducting channel. SecDF uses the proton motive force (PMF) to complete protein translocation after the ATP-dependent function of SecA. This is Protein translocase subunit SecF from Rickettsia prowazekii (strain Madrid E).